The chain runs to 607 residues: Guanine nucleotide-binding protein-like 1 (607 aa).

Positions 1–14 (MPRKKPFSVKQKKK) are enriched in basic residues. The interval 1–81 (MPRKKPFSVK…GPRGYDPNRY (81 aa)) is disordered. A compositionally biased stretch (basic and acidic residues) spans 15 to 26 (QLQDKRERKRGL). Residues Ser-32, Ser-33, and Ser-34 each carry the phosphoserine modification. Residues Thr-48 and Thr-50 each carry the phosphothreonine modification. Phosphoserine is present on residues Ser-51 and Ser-68. Positions 178-418 (WRQLWRVLEM…LCDCPGLIFP (241 aa)) constitute a CP-type G domain. 225-228 (NKVD) contributes to the GTP binding site. Ser-324 bears the Phosphoserine mark. GTP is bound by residues 367 to 374 (GFPNVGKS) and 411 to 415 (DCPGL). Residues 544–607 (GRVGPAGDEE…PYALLGEDEC (64 aa)) form a disordered region. Acidic residues predominate over residues 550–585 (GDEEEEEEEELSSSCEEEGEEDRDADEEGEGDEDTP). 3 positions are modified to phosphoserine: Ser-561, Ser-562, and Ser-563.

It belongs to the TRAFAC class YlqF/YawG GTPase family.

Functionally, possible regulatory or functional link with the histocompatibility cluster. The protein is Guanine nucleotide-binding protein-like 1 (Gnl1) of Mus musculus (Mouse).